The chain runs to 609 residues: NADH-ubiquinone oxidoreductase chain 5 (609 aa).

Helical transmembrane passes span 6–26, 35–55, 84–104, 116–138, 140–160, 171–191, 240–260, 272–292, 300–319, 330–350, 365–385, 409–429, 456–476, 481–501, and 581–601; these read SSILMILILLTTPIIISMTNL, YATSSIKFSFLLSLLPLLLFF, YFSILFLSVALFVTWSIMQFS, RFIKYLMMFLITMLILTSANNLF, LFIGWEGVGIMSFLLIGWWYG, AILYNRVGDIGFILAMTWFCL, TPVSALLHSSTMVVAGIFLMI, IMTAMLCLGAITTLFTAICAL, IVAFSTSSQLGLMMVTLGIN, THAFFKAMLFMCSGSIIHSLN, MPFTSSCLIIGSLALTGMPFL, MITLIATSMTAVYSMRIIYFV, LALGSILAGFLISLNIPPTNI, MPWHLKMTALLITILGFAIAL, and GLIKLYFLSFLITISLIFILH.

This sequence belongs to the complex I subunit 5 family. As to quaternary structure, core subunit of respiratory chain NADH dehydrogenase (Complex I) which is composed of 45 different subunits.

The protein resides in the mitochondrion inner membrane. It carries out the reaction a ubiquinone + NADH + 5 H(+)(in) = a ubiquinol + NAD(+) + 4 H(+)(out). In terms of biological role, core subunit of the mitochondrial membrane respiratory chain NADH dehydrogenase (Complex I) which catalyzes electron transfer from NADH through the respiratory chain, using ubiquinone as an electron acceptor. Essential for the catalytic activity and assembly of complex I. The protein is NADH-ubiquinone oxidoreductase chain 5 of Rattus norvegicus (Rat).